Reading from the N-terminus, the 1097-residue chain is Mitochondrial distribution and morphology protein 34 (1097 aa).

One can recognise an SMP-LTD domain in the interval 1–198; it reads MSFNFKWPTF…LPGIIHRLSQ (198 aa). 8 disordered regions span residues 204–305, 317–343, 390–427, 480–520, 556–600, 645–675, 716–817, and 923–1097; these read EAKS…PLHS, AAFPDIENYDPTYGLRPDDLPTHSGFS, QSDDEGSEAEQSQDAHSSSHDGKHDEGDATTDSDLDAV, DDQP…TSSL, PEVD…SSRT, LDAERSSVSGSDSRRGLTNPTSRESSYRDLS, GQNA…SPGV, and GSSA…AIRE. The segment covering 205–229 has biased composition (basic and acidic residues); it reads AKSEKDKVKQKAEAEEPPARSREPT. Positions 252-263 are enriched in basic residues; sequence RKSHSKAKKHSR. A compositionally biased stretch (low complexity) spans 274 to 283; that stretch reads SPCQSPQRPR. Over residues 284–293 the composition is skewed to basic residues; it reads QSPRRPRHVA. Positions 406-416 are enriched in basic and acidic residues; sequence SSSHDGKHDEG. 2 stretches are compositionally biased toward low complexity: residues 508-519 and 572-586; these read SSRSDRSACTSS and GGTPSTRTGTTRFGS. Residues 662–675 are compositionally biased toward polar residues; sequence TNPTSRESSYRDLS. A compositionally biased stretch (low complexity) spans 759–779; that stretch reads GMSATPARTRASAAASARSRP. Positions 784-796 are enriched in polar residues; that stretch reads YATSPPGDSSGWQ. The segment covering 923 to 943 has biased composition (low complexity); it reads GSSAASGTGTTSGSSQTGANA. The span at 1004 to 1024 shows a compositional bias: polar residues; the sequence is SNKPNNTSTGQGEDSQDNSAA. Residues 1045 to 1059 are compositionally biased toward low complexity; sequence ASGSSASSAITDSSS.

The protein belongs to the MDM34 family. Component of the ER-mitochondria encounter structure (ERMES) or MDM complex, composed of MMM1, MDM10, MDM12 and MDM34.

Its subcellular location is the mitochondrion outer membrane. Component of the ERMES/MDM complex, which serves as a molecular tether to connect the endoplasmic reticulum (ER) and mitochondria. Components of this complex are involved in the control of mitochondrial shape and protein biogenesis, and function in nonvesicular lipid trafficking between the ER and mitochondria. MDM34 is required for the interaction of the ER-resident membrane protein MMM1 and the outer mitochondrial membrane-resident beta-barrel protein MDM10. This chain is Mitochondrial distribution and morphology protein 34, found in Mycosarcoma maydis (Corn smut fungus).